A 318-amino-acid polypeptide reads, in one-letter code: MSDNQQNLRLTARVGYEAHFSWSYLKPQYWGIWLGIFFLLLLAFVPFRLRDKLTGKLGIWIGHKAKKQRTRAQTNLQYCFPHWTEQQREQVIDKMFAVVAQVMFGIGEIAIRSKKHLQKRSEFIGLEHIEQAKAEGKNIILMVPHGWAIDASGIILHTQGMPMTSMYNPHRNPLVDWLWTITRQRFGGKMHARQNGIKPFLSHVRKGEMGYYLPDEDFGAEQSVFVDFFGTYKATLPGLNKMAKLSKAVVIPMFPRYNAETGKYEMEIHPAMNLSDDPEQSARAMNEEIESFVTPAPEQYVWILQLLRTRKDGEDLYD.

The chain crosses the membrane as a helical span at residues 27-47 (PQYWGIWLGIFFLLLLAFVPF). The short motif at 145-150 (HGWAID) is the HXXXXD motif element.

Belongs to the LpxL/LpxM/LpxP family. LpxM subfamily.

The protein localises to the cell inner membrane. The catalysed reaction is an alpha-Kdo-(2-&gt;4)-alpha-Kdo-(2-&gt;6)-(acyl)-lipid IVA + a fatty acyl-[ACP] = an alpha-Kdo-(2-&gt;4)-alpha-Kdo-(2-&gt;6)-lipid A + holo-[ACP]. It functions in the pathway glycolipid biosynthesis; KDO(2)-lipid A biosynthesis; KDO(2)-lipid A from CMP-3-deoxy-D-manno-octulosonate and lipid IV(A): step 4/4. Its pathway is bacterial outer membrane biogenesis; lipopolysaccharide biosynthesis. Functionally, catalyzes the transfer of an acyl chain from an acyl-[acyl-carrier-protein] (ACP) to a Kdo(2)-(acyl)-lipid IV(A) to form a Kdo(2)-lipid A. The chain is Lipid A biosynthesis acyltransferase from Haemophilus influenzae (strain ATCC 51907 / DSM 11121 / KW20 / Rd).